The chain runs to 214 residues: Tungstate uptake system ATP-binding protein TupC (214 aa).

The 212-residue stretch at 3–214 (ITVSNLKKSY…GRVGEADGFF (212 aa)) folds into the ABC transporter domain. 35–42 (GPNGAGKT) contributes to the ATP binding site.

The protein belongs to the ABC transporter superfamily. As to quaternary structure, the complex is composed of two ATP-binding proteins (TupC), two transmembrane proteins (TupB) and a solute-binding protein (TupA).

The enzyme catalyses tungstate(in) + ATP + H2O = tungstate(out) + ADP + phosphate + H(+). Its function is as follows. Part of an ABC transporter complex involved in tungstate uptake. Probably responsible for energy coupling to the transport system. This is Tungstate uptake system ATP-binding protein TupC from Peptoclostridium acidaminophilum (Eubacterium acidaminophilum).